Consider the following 183-residue polypeptide: Type II secretion system protein H (183 aa).

Positions 1–8 (MRRHRQSG) are cleaved as a propeptide — leader sequence. Phe-9 carries the N-methylphenylalanine modification. The chain crosses the membrane as a helical span at residues 9–28 (FTLLEVLLVAMLMGLVATAV).

It belongs to the GSP H family. In terms of assembly, type II secretion is composed of four main components: the outer membrane complex, the inner membrane complex, the cytoplasmic secretion ATPase and the periplasm-spanning pseudopilus. Interacts with core component ExeG. Cleaved by prepilin peptidase. In terms of processing, methylated by prepilin peptidase at the amino group of the N-terminal phenylalanine once the leader sequence is cleaved by prepilin peptidase.

The protein resides in the cell inner membrane. Component of the type II secretion system required for the energy-dependent secretion of extracellular factors such as proteases and toxins from the periplasm. Part of the pseudopilus tip complex that is critical for the recognition and binding of secretion substrates. The sequence is that of Type II secretion system protein H (exeH) from Aeromonas hydrophila.